The following is a 41-amino-acid chain: Fibrinogen beta chain (41 aa).

Positions 1-41 (ADDYDDEVLPDARGHRPIDRKREELPSLRPAPPPISGGGYR) are disordered. Sulfotyrosine is present on tyrosine 4. Residues 10 to 26 (PDARGHRPIDRKREELP) show a composition bias toward basic and acidic residues. The tract at residues 14-16 (GHR) is beta-chain polymerization, binding distal domain of another fibrin.

In terms of assembly, heterohexamer; disulfide linked. Contains 2 sets of 3 non-identical chains (alpha, beta and gamma). The 2 heterotrimers are in head to head conformation with the N-termini in a small central domain. Post-translationally, conversion of fibrinogen to fibrin is triggered by thrombin, which cleaves fibrinopeptides A and B from alpha and beta chains, and thus exposes the N-terminal polymerization sites responsible for the formation of the soft clot.

It is found in the secreted. Its function is as follows. Cleaved by the protease thrombin to yield monomers which, together with fibrinogen alpha (FGA) and fibrinogen gamma (FGG), polymerize to form an insoluble fibrin matrix. Fibrin has a major function in hemostasis as one of the primary components of blood clots. In addition, functions during the early stages of wound repair to stabilize the lesion and guide cell migration during re-epithelialization. Was originally thought to be essential for platelet aggregation, based on in vitro studies using anticoagulated blood. However subsequent studies have shown that it is not absolutely required for thrombus formation in vivo. Enhances expression of SELP in activated platelets. Maternal fibrinogen is essential for successful pregnancy. Fibrin deposition is also associated with infection, where it protects against IFNG-mediated hemorrhage. May also facilitate the antibacterial immune response via both innate and T-cell mediated pathways. In Oryctolagus cuniculus (Rabbit), this protein is Fibrinogen beta chain (FGB).